Reading from the N-terminus, the 363-residue chain is Carbamoyl phosphate synthase small chain (363 aa).

Residues 1–172 (MTKRILMLED…AFASPGDGKR (172 aa)) are CPSase. The L-glutamine site is built by Ser-46, Gly-220, and Gly-222. Residues 172 to 359 (RVVLVDYGVK…MEMMNGKEEG (188 aa)) form the Glutamine amidotransferase type-1 domain. The active-site Nucleophile is the Cys-247. L-glutamine contacts are provided by Leu-248, Gln-251, Asn-289, Gly-291, and Tyr-292. Catalysis depends on residues His-332 and Glu-334.

Belongs to the CarA family. Composed of two chains; the small (or glutamine) chain promotes the hydrolysis of glutamine to ammonia, which is used by the large (or ammonia) chain to synthesize carbamoyl phosphate. Tetramer of heterodimers (alpha,beta)4.

It carries out the reaction hydrogencarbonate + L-glutamine + 2 ATP + H2O = carbamoyl phosphate + L-glutamate + 2 ADP + phosphate + 2 H(+). It catalyses the reaction L-glutamine + H2O = L-glutamate + NH4(+). The protein operates within amino-acid biosynthesis; L-arginine biosynthesis; carbamoyl phosphate from bicarbonate: step 1/1. It functions in the pathway pyrimidine metabolism; UMP biosynthesis via de novo pathway; (S)-dihydroorotate from bicarbonate: step 1/3. Its function is as follows. Small subunit of the glutamine-dependent carbamoyl phosphate synthetase (CPSase). CPSase catalyzes the formation of carbamoyl phosphate from the ammonia moiety of glutamine, carbonate, and phosphate donated by ATP, constituting the first step of 2 biosynthetic pathways, one leading to arginine and/or urea and the other to pyrimidine nucleotides. The small subunit (glutamine amidotransferase) binds and cleaves glutamine to supply the large subunit with the substrate ammonia. This is Carbamoyl phosphate synthase small chain from Listeria monocytogenes serotype 4b (strain F2365).